Consider the following 185-residue polypeptide: Early nodulin-like protein 17 (185 aa).

An N-terminal signal peptide occupies residues Met1–Ala21. In terms of domain architecture, Phytocyanin spans Lys37 to Ser137. 2 N-linked (GlcNAc...) asparagine glycosylation sites follow: Asn79 and Asn94. A disulfide bridge connects residues Cys93 and Cys125. The interval Asp136–Ala155 is disordered. Ser156 carries the GPI-anchor amidated serine lipid modification. The propeptide at Ala157–Trp185 is removed in mature form.

This sequence belongs to the early nodulin-like (ENODL) family. Expressed ubiquitously. Accumulates mainly in anthers, stigmas and ovaries.

Its subcellular location is the cell membrane. Functionally, may act as a carbohydrate transporter. Required for male fertility and seed yield. This is Early nodulin-like protein 17 from Oryza sativa subsp. japonica (Rice).